A 66-amino-acid polypeptide reads, in one-letter code: Large ribosomal subunit protein eL24 (66 aa).

Cysteine 6, cysteine 9, cysteine 32, and cysteine 36 together coordinate Zn(2+). Residues 6-36 form a C4-type zinc finger; it reads CSFCGKSIEPASGFLYVRKDGSVLNFCSRKC.

Belongs to the eukaryotic ribosomal protein eL24 family. As to quaternary structure, part of the 50S ribosomal subunit. Forms a cluster with proteins L3 and L14. Zn(2+) serves as cofactor.

Functionally, binds to the 23S rRNA. In Picrophilus torridus (strain ATCC 700027 / DSM 9790 / JCM 10055 / NBRC 100828 / KAW 2/3), this protein is Large ribosomal subunit protein eL24.